Consider the following 376-residue polypeptide: MAVSKFVQIRRDLHKIPEIGFKEWKTQQYILDYIGTLSNEHVEVKVWRTGVIVKVKGKNPEKVIGYRADIDGLPITEETGYEFASVHEGMMHACGHDLHTTIGLGLLTAAVTERIDDDLVFLFQPAEEGPGGALPMLESEELKEWKPNIILGLHIAPEYPVGTIATKEGLLFANTSELYVDLKGKGGHAAYPHTANDMIVAASHLVTQLQSVISRNVNPLDSAVITIGKITGGTVQNIIAEKSRLEGTIRTLSVESMSRVKSRIEAIVAGIEASFQCEAVIDYGAMYHQVYNHEALTREFMQFVSEQTDMKVITCTEAMTGEDFGYMLQEIPGFMFWLGVNSEYGLHHAKLRPDEEAIEKAIVFLDQYVKWKGTRK.

Asp69 is a catalytic residue. Glu128 functions as the Proton acceptor in the catalytic mechanism.

It belongs to the peptidase M20A family. N-acetyldiaminopimelate deacetylase subfamily.

The enzyme catalyses N-acetyl-(2S,6S)-2,6-diaminopimelate + H2O = (2S,6S)-2,6-diaminopimelate + acetate. Its pathway is amino-acid biosynthesis; L-lysine biosynthesis via DAP pathway; LL-2,6-diaminopimelate from (S)-tetrahydrodipicolinate (acetylase route): step 3/3. Functionally, catalyzes the conversion of N-acetyl-diaminopimelate to diaminopimelate and acetate. This Bacillus anthracis (strain A0248) protein is N-acetyldiaminopimelate deacetylase.